The sequence spans 484 residues: Acid alpha-amylase (484 aa).

N24 carries N-linked (GlcNAc...) asparagine glycosylation. A disulfide bridge connects residues C30 and C38. W83 is a binding site for substrate. D121 is a binding site for Ca(2+). H122 is a substrate binding site. C150 and C164 form a disulfide bridge. N-linked (GlcNAc...) asparagine glycosylation is present at N157. E162 and D175 together coordinate Ca(2+). Residue N197 is glycosylated (N-linked (GlcNAc...) asparagine). R204 lines the substrate pocket. Ca(2+) is bound by residues D206, E210, and E230. D206 acts as the Nucleophile in catalysis. Substrate is bound at residue L209–E210. E230 (proton donor) is an active-site residue. Residue G234 participates in substrate binding. The cysteines at positions 240 and 283 are disulfide-linked. Substrate contacts are provided by D297 and R344. C440 and C475 form a disulfide bridge.

Belongs to the glycosyl hydrolase 13 family. As to quaternary structure, monomer. Ca(2+) is required as a cofactor.

Its subcellular location is the secreted. The enzyme catalyses Endohydrolysis of (1-&gt;4)-alpha-D-glucosidic linkages in polysaccharides containing three or more (1-&gt;4)-alpha-linked D-glucose units.. The polypeptide is Acid alpha-amylase (Aspergillus niger).